A 309-amino-acid polypeptide reads, in one-letter code: Porphobilinogen deaminase (309 aa).

The residue at position 244 (Cys-244) is an S-(dipyrrolylmethanemethyl)cysteine.

This sequence belongs to the HMBS family. Monomer. Dipyrromethane is required as a cofactor.

The catalysed reaction is 4 porphobilinogen + H2O = hydroxymethylbilane + 4 NH4(+). It participates in porphyrin-containing compound metabolism; protoporphyrin-IX biosynthesis; coproporphyrinogen-III from 5-aminolevulinate: step 2/4. Functionally, tetrapolymerization of the monopyrrole PBG into the hydroxymethylbilane pre-uroporphyrinogen in several discrete steps. This is Porphobilinogen deaminase from Rhizobium meliloti (strain 1021) (Ensifer meliloti).